A 564-amino-acid chain; its full sequence is Efflux pump DEP3 (564 aa).

The span at 1–12 shows a compositional bias: polar residues; the sequence is MVYSSTSSSQNR. Residues 1–48 are disordered; sequence MVYSSTSSSQNRPDGEKHVEAVGSSTRIPSDELVDRGGGDTTTGKQSP. Residues 29 to 38 show a composition bias toward basic and acidic residues; sequence PSDELVDRGG. The next 14 membrane-spanning stretches (helical) occupy residues 65-85, 91-111, 122-142, 152-172, 185-205, 212-232, 255-275, 281-301, 332-352, 362-382, 386-406, 423-443, 452-472, and 528-548; these read STTL…PAII, LELL…ILLW, WVYI…GAAP, VIAG…VSVL, STVV…AFAA, WGFY…FLLF, AVIF…GGVV, GTVI…IVLL, FLSS…FQFI, VRLL…GFLM, GLIP…TALM, ILIG…VQSL, AVGA…AISG, and TIWA…FPLL.

Belongs to the major facilitator superfamily. TCR/Tet family.

It is found in the cell membrane. Functionally, efflux pump; part of the gene cluster that mediates the biosynthesis of depudecin, a highly oxidized eleven-carbon linear polyketide that acts as a histone deacetylase (HDAC) inhibitor and makes a small contribution to pathogenesis. Is presumed either to be responsible for exporting depudecin, to provide self-protection, or both. This Alternaria brassicicola (Dark leaf spot agent) protein is Efflux pump DEP3.